Here is a 461-residue protein sequence, read N- to C-terminus: Photosystem II CP43 reaction center protein (461 aa).

A propeptide spanning residues 1–2 is cleaved from the precursor; the sequence is ME. Position 3 is an N-acetylthreonine (threonine 3). Phosphothreonine is present on threonine 3. 5 helical membrane-spanning segments follow: residues 57 to 81, 122 to 143, 166 to 188, 243 to 263, and 279 to 300; these read LFEV…PHLA, LIGP…KDKN, KAMY…RVIT, KPFA…LSYS, and WFNN…ASQA. Glutamate 355 lines the [CaMn4O5] cluster pocket. The chain crosses the membrane as a helical span at residues 435–459; sequence RARAAAAGFEKGIERETEPALSMKP.

It belongs to the PsbB/PsbC family. PsbC subfamily. As to quaternary structure, PSII is composed of 1 copy each of membrane proteins PsbA, PsbB, PsbC, PsbD, PsbE, PsbF, PsbH, PsbI, PsbJ, PsbK, PsbL, PsbM, PsbT, PsbX, PsbY, PsbZ, Psb30/Ycf12, at least 3 peripheral proteins of the oxygen-evolving complex and a large number of cofactors. It forms dimeric complexes. Binds multiple chlorophylls and provides some of the ligands for the Ca-4Mn-5O cluster of the oxygen-evolving complex. It may also provide a ligand for a Cl- that is required for oxygen evolution. PSII binds additional chlorophylls, carotenoids and specific lipids. serves as cofactor.

It localises to the plastid. The protein localises to the chloroplast thylakoid membrane. In terms of biological role, one of the components of the core complex of photosystem II (PSII). It binds chlorophyll and helps catalyze the primary light-induced photochemical processes of PSII. PSII is a light-driven water:plastoquinone oxidoreductase, using light energy to abstract electrons from H(2)O, generating O(2) and a proton gradient subsequently used for ATP formation. This is Photosystem II CP43 reaction center protein from Chlorokybus atmophyticus (Soil alga).